A 281-amino-acid chain; its full sequence is sn-glycerol-3-phosphate transport system permease protein UgpE (281 aa).

6 helical membrane-spanning segments follow: residues 16–36 (LILGIAVILFPLYVAFVAATL), 85–105 (FSITLGKITVSMLSAFAIVWF), 113–133 (FFWMIFITLMLPVEVRIFPTV), 142–162 (LDSYAGLTLPLMASATATFLF), 202–222 (ALFVITFIYGWNQYLWPLLII), and 247–267 (WNSVMAAMLLTLIPPVVIVLV). An ABC transmembrane type-1 domain is found at 77–268 (LLNSFVMAFS…IPPVVIVLVM (192 aa)).

Belongs to the binding-protein-dependent transport system permease family. UgpAE subfamily. The complex is composed of two ATP-binding proteins (UgpC), two transmembrane proteins (UgpA and UgpE) and a solute-binding protein (UgpB).

It localises to the cell inner membrane. Its function is as follows. Part of the ABC transporter complex UgpBAEC involved in sn-glycerol-3-phosphate (G3P) import. Probably responsible for the translocation of the substrate across the membrane. This is sn-glycerol-3-phosphate transport system permease protein UgpE (ugpE) from Escherichia coli O6:K15:H31 (strain 536 / UPEC).